The chain runs to 358 residues: GTPase Obg (358 aa).

The region spanning 1-159 is the Obg domain; it reads MKFLDEAKVY…RWIWLRLKLI (159 aa). Positions 160–327 constitute an OBG-type G domain; the sequence is ADAGLVGLPN…VLRALVEVIG (168 aa). Residues 166-173, 191-195, 212-215, 279-282, and 308-310 contribute to the GTP site; these read GLPNAGKS, FTTLH, DIPG, NKID, and SGV. The Mg(2+) site is built by S173 and T193. The interval 335 to 358 is disordered; sequence AKGADASAAQAMETPVARAKPWSP.

Belongs to the TRAFAC class OBG-HflX-like GTPase superfamily. OBG GTPase family. In terms of assembly, monomer. Mg(2+) is required as a cofactor.

The protein localises to the cytoplasm. Functionally, an essential GTPase which binds GTP, GDP and possibly (p)ppGpp with moderate affinity, with high nucleotide exchange rates and a fairly low GTP hydrolysis rate. Plays a role in control of the cell cycle, stress response, ribosome biogenesis and in those bacteria that undergo differentiation, in morphogenesis control. The polypeptide is GTPase Obg (Nitrobacter winogradskyi (strain ATCC 25391 / DSM 10237 / CIP 104748 / NCIMB 11846 / Nb-255)).